Here is a 76-residue protein sequence, read N- to C-terminus: Omega-conotoxin MoVIA (76 aa).

Residues 1–22 (MKLTCVVIVAVLFLTACQLITA) form the signal peptide. A propeptide spanning residues 23 to 45 (DDSRSTQRHRALRSTTKLSMSTR) is cleaved from the precursor. Disulfide bonds link cysteine 46–cysteine 61, cysteine 53–cysteine 64, and cysteine 60–cysteine 71. Residues proline 49 and proline 55 each carry the hydroxyproline modification.

This sequence belongs to the conotoxin O1 superfamily. As to expression, expressed by the venom duct.

Its subcellular location is the secreted. Functionally, omega-conotoxins act at presynaptic membranes, they bind and block voltage-gated calcium channels (Cav). This toxin potently blocks mammalian N-type calcium channels (Cav2.2/CACNA1B) (IC(50)=330 nM on human channels). It is 9-fold more potent in displacing radiolabeled omega-conotoxin GVIA from fish brain membranes than from human SH-SY5Y cells. Omega-conotoxins act at presynaptic membranes, they bind and block voltage-gated calcium channels (Cav). This toxin potently blocks mammalian N-type calcium channels (Cav2.2/CACNA1B) (IC(50)=600 nM on human channels). It is 60-fold more potent in displacing radiolabeled omega-conotoxin GVIA from fish brain membranes than from human SH-SY5Y cells. In vivo, when tested on rat neuropathic pain model, this toxin shows an analgesic activity. The protein is Omega-conotoxin MoVIA of Conus moncuri (Sea snail).